We begin with the raw amino-acid sequence, 196 residues long: Pyridoxal 5'-phosphate synthase subunit PdxT (196 aa).

47-49 is an L-glutamine binding site; sequence GES. Cys-79 (nucleophile) is an active-site residue. L-glutamine-binding positions include Arg-106 and 134-135; that span reads IR. Active-site charge relay system residues include His-170 and Glu-172.

This sequence belongs to the glutaminase PdxT/SNO family. In terms of assembly, in the presence of PdxS, forms a dodecamer of heterodimers. Only shows activity in the heterodimer.

The catalysed reaction is aldehydo-D-ribose 5-phosphate + D-glyceraldehyde 3-phosphate + L-glutamine = pyridoxal 5'-phosphate + L-glutamate + phosphate + 3 H2O + H(+). The enzyme catalyses L-glutamine + H2O = L-glutamate + NH4(+). The protein operates within cofactor biosynthesis; pyridoxal 5'-phosphate biosynthesis. Its function is as follows. Catalyzes the hydrolysis of glutamine to glutamate and ammonia as part of the biosynthesis of pyridoxal 5'-phosphate. The resulting ammonia molecule is channeled to the active site of PdxS. The sequence is that of Pyridoxal 5'-phosphate synthase subunit PdxT from Bacillus mycoides (strain KBAB4) (Bacillus weihenstephanensis).